A 405-amino-acid chain; its full sequence is Arginine biosynthesis bifunctional protein ArgJ (405 aa).

Substrate contacts are provided by Thr-152, Lys-178, Thr-189, Glu-276, Asn-400, and Thr-405. The Nucleophile role is filled by Thr-189.

Belongs to the ArgJ family. As to quaternary structure, heterotetramer of two alpha and two beta chains.

It localises to the cytoplasm. It carries out the reaction N(2)-acetyl-L-ornithine + L-glutamate = N-acetyl-L-glutamate + L-ornithine. It catalyses the reaction L-glutamate + acetyl-CoA = N-acetyl-L-glutamate + CoA + H(+). It participates in amino-acid biosynthesis; L-arginine biosynthesis; L-ornithine and N-acetyl-L-glutamate from L-glutamate and N(2)-acetyl-L-ornithine (cyclic): step 1/1. It functions in the pathway amino-acid biosynthesis; L-arginine biosynthesis; N(2)-acetyl-L-ornithine from L-glutamate: step 1/4. Its function is as follows. Catalyzes two activities which are involved in the cyclic version of arginine biosynthesis: the synthesis of N-acetylglutamate from glutamate and acetyl-CoA as the acetyl donor, and of ornithine by transacetylation between N(2)-acetylornithine and glutamate. The protein is Arginine biosynthesis bifunctional protein ArgJ of Pseudomonas fluorescens (strain Pf0-1).